A 227-amino-acid chain; its full sequence is MAYPVQLGFQDAASPIMEELLYFHDHTLMIVFLISSLVLYIISLMLTTKLMHTSTMDAQEVETVWTILPAIILILIALPSLRILYMMDEITTPSLTLKTMGHQWYWSYEYTDYEDLSFDSYMVPSSDLKPGELRLLEVDNRIVLPTELSIRMLISSEDVLHSWAVPSLGVKTDAIPGRLNQATLMTSRPGIYYGQCSEICGANHSFMPIVLELVPLKHFEEWLLSMF.

The Mitochondrial intermembrane segment spans residues 1 to 14 (MAYPVQLGFQDAAS). A helical membrane pass occupies residues 15 to 45 (PIMEELLYFHDHTLMIVFLISSLVLYIISLM). Residues 46-59 (LTTKLMHTSTMDAQ) are Mitochondrial matrix-facing. Residues 60–87 (EVETVWTILPAIILILIALPSLRILYMM) form a helical membrane-spanning segment. At 88 to 227 (DEITTPSLTL…HFEEWLLSMF (140 aa)) the chain is on the mitochondrial intermembrane side. Residues His-161, Cys-196, Glu-198, Cys-200, His-204, and Met-207 each contribute to the Cu cation site. Residue Glu-198 coordinates Mg(2+).

The protein belongs to the cytochrome c oxidase subunit 2 family. Component of the cytochrome c oxidase (complex IV, CIV), a multisubunit enzyme composed of 14 subunits. The complex is composed of a catalytic core of 3 subunits MT-CO1, MT-CO2 and MT-CO3, encoded in the mitochondrial DNA, and 11 supernumerary subunits COX4I, COX5A, COX5B, COX6A, COX6B, COX6C, COX7A, COX7B, COX7C, COX8 and NDUFA4, which are encoded in the nuclear genome. The complex exists as a monomer or a dimer and forms supercomplexes (SCs) in the inner mitochondrial membrane with NADH-ubiquinone oxidoreductase (complex I, CI) and ubiquinol-cytochrome c oxidoreductase (cytochrome b-c1 complex, complex III, CIII), resulting in different assemblies (supercomplex SCI(1)III(2)IV(1) and megacomplex MCI(2)III(2)IV(2)). Found in a complex with TMEM177, COA6, COX18, COX20, SCO1 and SCO2. Interacts with TMEM177 in a COX20-dependent manner. Interacts with COX20. Interacts with COX16. The cofactor is Cu cation.

It localises to the mitochondrion inner membrane. The enzyme catalyses 4 Fe(II)-[cytochrome c] + O2 + 8 H(+)(in) = 4 Fe(III)-[cytochrome c] + 2 H2O + 4 H(+)(out). Functionally, component of the cytochrome c oxidase, the last enzyme in the mitochondrial electron transport chain which drives oxidative phosphorylation. The respiratory chain contains 3 multisubunit complexes succinate dehydrogenase (complex II, CII), ubiquinol-cytochrome c oxidoreductase (cytochrome b-c1 complex, complex III, CIII) and cytochrome c oxidase (complex IV, CIV), that cooperate to transfer electrons derived from NADH and succinate to molecular oxygen, creating an electrochemical gradient over the inner membrane that drives transmembrane transport and the ATP synthase. Cytochrome c oxidase is the component of the respiratory chain that catalyzes the reduction of oxygen to water. Electrons originating from reduced cytochrome c in the intermembrane space (IMS) are transferred via the dinuclear copper A center (CU(A)) of subunit 2 and heme A of subunit 1 to the active site in subunit 1, a binuclear center (BNC) formed by heme A3 and copper B (CU(B)). The BNC reduces molecular oxygen to 2 water molecules using 4 electrons from cytochrome c in the IMS and 4 protons from the mitochondrial matrix. The sequence is that of Cytochrome c oxidase subunit 2 (MT-CO2) from Propithecus tattersalli (Golden-crowned Sifaka).